Consider the following 731-residue polypeptide: Putative pentatricopeptide repeat-containing protein At1g17630 (731 aa).

PPR repeat units follow at residues 88-118, 122-156, 157-191, 192-222, 223-257, 258-292, 293-327, 328-358, 359-393, 398-432, 433-467, 468-498, 499-533, 534-569, and 570-600; these read SGSLAANLISVYARLGLLLDARNVFETVSLV, DLRLWNSILKANVSHGLYENALELYRGMRQRGLTG, DGYILPLILRACRYLGRFGLCRAFHTQVIQIGLKE, NLHVVNELLTLYPKAGRMGDAYNLFVEMPVR, NRMSWNVMIKGFSQEYDCESAVKIFEWMQREEFKP, DEVTWTSVLSCHSQCGKFEDVLKYFHLMRMSGNAV, SGEALAVFFSVCAELEALSIAEKVHGYVIKGGFEE, YLPSRNALIHVYGKQGKVKDAEHLFRQIRNK, GIESWNSLITSFVDAGKLDEALSLFSELEEMNHVC, NVVTWTSVIKGCNVQGRGDDSLEYFRQMQFSKVLA, NSVTICCILSICAELPALNLGREIHGHVIRTSMSE, NILVQNALVNMYAKCGLLSEGSLVFEAIRDK, DLISWNSIIKGYGMHGFAEKALSMFDRMISSGFHP, DGIALVAVLSACSHAGLVEKGREIFYSMSKRFGLEP, and QQEHYACIVDLLGRVGFLKEASEIVKNMPME. The segment at 605–680 is type E motif; that stretch reads VLGALLNSCR…VSGSSWIEVK (76 aa). A type E(+) motif region spans residues 681-711; that stretch reads KKKYKFSSGSIVQSEFETIYPVLEDLVSHML.

This sequence belongs to the PPR family. PCMP-E subfamily.

The chain is Putative pentatricopeptide repeat-containing protein At1g17630 (PCMP-E72) from Arabidopsis thaliana (Mouse-ear cress).